The sequence spans 359 residues: Ribosomal RNA small subunit methyltransferase mra1 (359 aa).

The span at M1–R10 shows a compositional bias: basic residues. Disordered stretches follow at residues M1–E62 and V98–R118. Residue S12 is modified to Phosphoserine. A compositionally biased stretch (polar residues) spans K18 to T39. T33 is subject to Phosphothreonine. Phosphoserine is present on S100. Residues L287, G314, G319 to D321, and I334 to L339 each bind S-adenosyl-L-methionine.

It belongs to the class IV-like SAM-binding methyltransferase superfamily. RNA methyltransferase NEP1 family. As to quaternary structure, homodimer.

The protein resides in the nucleus. It is found in the nucleolus. It catalyses the reaction a pseudouridine in rRNA + S-adenosyl-L-methionine = an N(1)-methylpseudouridine in rRNA + S-adenosyl-L-homocysteine + H(+). S-adenosyl-L-methionine-dependent pseudouridine N(1)-methyltransferase that methylates the pseudouridine corresponding to position 1189 (Psi1189) in S.cerevisiae 18S rRNA. Involved the biosynthesis of the hypermodified N1-methyl-N3-(3-amino-3-carboxypropyl) pseudouridine (m1acp3-Psi) conserved in eukaryotic 18S rRNA. Also has an essential role in 40S ribosomal subunit biogenesis independent on its methyltransferase activity, facilitating the incorporation of ribosomal protein S19 during the formation of pre-ribosomes. Essential for cell growth. It also has a key role in promoting the mating function. The chain is Ribosomal RNA small subunit methyltransferase mra1 from Schizosaccharomyces pombe (strain 972 / ATCC 24843) (Fission yeast).